Reading from the N-terminus, the 143-residue chain is Transcriptional regulator MraZ (143 aa).

SpoVT-AbrB domains are found at residues 5 to 47 and 76 to 119; these read EFLH…PMDE and AIEC…ANDA.

It belongs to the MraZ family. Forms oligomers.

The protein localises to the cytoplasm. The protein resides in the nucleoid. This Oceanobacillus iheyensis (strain DSM 14371 / CIP 107618 / JCM 11309 / KCTC 3954 / HTE831) protein is Transcriptional regulator MraZ.